A 195-amino-acid chain; its full sequence is Protein A43 (195 aa).

Residues Met-1–Ser-21 form the signal peptide. Over Ser-23–Asp-166 the chain is Extracellular. Residues Asn-66 and Asn-115 are each glycosylated (N-linked (GlcNAc...) asparagine; by host). The chain crosses the membrane as a helical span at residues Ile-167 to Val-187. At Phe-188 to Ser-195 the chain is on the cytoplasmic side.

It belongs to the orthopoxvirus OPG172 protein family.

The protein localises to the host membrane. It is found in the host cell surface. The polypeptide is Protein A43 (OPG172) (Homo sapiens (Human)).